The chain runs to 733 residues: MFIKKKIDLGHGKVITIETGKMAKQADGSAVVTMNDTMVLATVVSSKTPPSPNQDFFPLQVEYREKYSAAGKFPGGFFKREGRPSEKEILSARLIDRALRPLFPDGYYQETQIIISVISSDTINDADVLGGIAASAAIMVSDIPFANPMSEVRVGRINGLFIVNPDINELAQSDMDICIGGTEDTICMLEGEMKEISEAEMLDAIKFGHDAIKKICALQRELAAEVAKPKRPFSPTVAPDELVNFVEEHCSAELKALAYTPLAKEERAEKTKAIYTQTIRKTLTHFTDRVGPDQIEADPTSAFCLNEHMIEECIHAVEKKVMRHMILDDGKRLDGRTLEQVRPISIELGLIPRAHGSALFTRGETQALVTLTLGTKKDAQSVDTLTDDKDKRFMLHYNFPPFSVGEIGRVGGAGRREIGHGNLAERAIKMVMPSEQEFPYTVRLVSDILESNGSSSMASVCGGTLAAMDGGIPLKKPVSGIAMGLIKEGDRYAVLSDILGNEDHLGDMDFKVAGTRDGITACQMDIKIDGLDYHILETALEQARKGRLHILDVMAEAIPESRADIGKYAPRLTTIQIPVDAIGMVIGKGGETIRSITEETGAEINIDDDGTVTIACSSPEATKAAVETIKTLVSKPEVGTIYMGKVRDIRDELGAFVEFLPKTDGLVHISEIARERIAKVSDVLKVGDRIKVKLIDVRKDPRTGKTKFALSIKALLDTDQQAETNGEAKPARD.

Positions 503 and 509 each coordinate Mg(2+). Positions 570–629 (PRLTTIQIPVDAIGMVIGKGGETIRSITEETGAEINIDDDGTVTIACSSPEATKAAVETI) constitute a KH domain. One can recognise an S1 motif domain in the interval 639 to 713 (GTIYMGKVRD…GKTKFALSIK (75 aa)).

Belongs to the polyribonucleotide nucleotidyltransferase family. Requires Mg(2+) as cofactor.

The protein localises to the cytoplasm. The catalysed reaction is RNA(n+1) + phosphate = RNA(n) + a ribonucleoside 5'-diphosphate. Involved in mRNA degradation. Catalyzes the phosphorolysis of single-stranded polyribonucleotides processively in the 3'- to 5'-direction. The polypeptide is Polyribonucleotide nucleotidyltransferase (Chlorobaculum tepidum (strain ATCC 49652 / DSM 12025 / NBRC 103806 / TLS) (Chlorobium tepidum)).